The sequence spans 271 residues: Mannosyl-3-phosphoglycerate phosphatase (271 aa).

D13 functions as the Nucleophile in the catalytic mechanism. Mg(2+)-binding residues include D13, D15, and D214.

Belongs to the HAD-like hydrolase superfamily. MPGP family. The cofactor is Mg(2+).

It is found in the cytoplasm. It catalyses the reaction 2-O-(alpha-D-mannosyl)-3-phosphoglycerate + H2O = (2R)-2-O-(alpha-D-mannosyl)-glycerate + phosphate. The protein is Mannosyl-3-phosphoglycerate phosphatase of Escherichia coli (strain K12 / DH10B).